Reading from the N-terminus, the 402-residue chain is Propionate kinase (402 aa).

Residues N11 and K18 each coordinate ATP. Position 11 (N11) interacts with Mg(2+). Substrate is bound at residue R86. Catalysis depends on D143, which acts as the Proton donor/acceptor. Residues H175, 203 to 207 (HLGNG), 278 to 280 (DLR), and 326 to 330 (GIGEN) each bind ATP.

The protein belongs to the acetokinase family. TdcD subfamily. Homodimer. The cofactor is Mg(2+).

The enzyme catalyses propanoate + ATP = propanoyl phosphate + ADP. It functions in the pathway amino-acid degradation; L-threonine degradation via propanoate pathway; propanoate from L-threonine: step 4/4. Functionally, catalyzes the conversion of propionyl phosphate and ADP to propionate and ATP. The sequence is that of Propionate kinase from Edwardsiella piscicida.